Reading from the N-terminus, the 180-residue chain is NAD(P)H-quinone oxidoreductase subunit I, chloroplastic (180 aa).

2 4Fe-4S ferredoxin-type domains span residues 55-84 and 95-124; these read GRIH…VDWR and LNYS…MTEE. 8 residues coordinate [4Fe-4S] cluster: C64, C67, C70, C74, C104, C107, C110, and C114.

This sequence belongs to the complex I 23 kDa subunit family. NDH is composed of at least 16 different subunits, 5 of which are encoded in the nucleus. Requires [4Fe-4S] cluster as cofactor.

The protein localises to the plastid. It is found in the chloroplast thylakoid membrane. It catalyses the reaction a plastoquinone + NADH + (n+1) H(+)(in) = a plastoquinol + NAD(+) + n H(+)(out). The catalysed reaction is a plastoquinone + NADPH + (n+1) H(+)(in) = a plastoquinol + NADP(+) + n H(+)(out). NDH shuttles electrons from NAD(P)H:plastoquinone, via FMN and iron-sulfur (Fe-S) centers, to quinones in the photosynthetic chain and possibly in a chloroplast respiratory chain. The immediate electron acceptor for the enzyme in this species is believed to be plastoquinone. Couples the redox reaction to proton translocation, and thus conserves the redox energy in a proton gradient. This Oryza nivara (Indian wild rice) protein is NAD(P)H-quinone oxidoreductase subunit I, chloroplastic.